A 470-amino-acid chain; its full sequence is Probable V-type proton ATPase subunit H 2 (470 aa).

Belongs to the V-ATPase H subunit family. In terms of assembly, V-ATPase is a heteromultimeric enzyme made up of two complexes: the ATP-hydrolytic V1 complex and the proton translocation V0 complex. The V1 complex consists of three catalytic AB heterodimers that form a heterohexamer, three peripheral stalks each consisting of EG heterodimers, one central rotor including subunits D and F, and the regulatory subunits C and H. The proton translocation complex V0 consists of the proton transport subunit a, a ring of proteolipid subunits c9c'', rotary subunit d, subunits e and f, and the accessory subunits vah-19/Ac45 and vah-20/PRR.

Subunit of the V1 complex of vacuolar(H+)-ATPase (V-ATPase), a multisubunit enzyme composed of a peripheral complex (V1) that hydrolyzes ATP and a membrane integral complex (V0) that translocates protons. V-ATPase is responsible for acidifying and maintaining the pH of intracellular compartments and in some cell types, is targeted to the plasma membrane, where it is responsible for acidifying the extracellular environment. Subunit H is essential for V-ATPase activity, but not for the assembly of the complex. This is Probable V-type proton ATPase subunit H 2 from Caenorhabditis elegans.